A 339-amino-acid polypeptide reads, in one-letter code: Casein kinase II subunit alpha' (339 aa).

Residues 50–334 (YEIINKIGRG…AKEAMDHKFF (285 aa)) enclose the Protein kinase domain. Residues 56–64 (IGRGKYSEV) and Lys-79 contribute to the ATP site. The active-site Proton acceptor is the Asp-167.

This sequence belongs to the protein kinase superfamily. Ser/Thr protein kinase family. CK2 subfamily. As to quaternary structure, tetramer composed of an alpha chain, an alpha', one beta chain and one beta' chain. Interacts with FACT subunits POB3 and SPT16. Interacts with NAP1. Interacts with YTA7.

The enzyme catalyses L-seryl-[protein] + ATP = O-phospho-L-seryl-[protein] + ADP + H(+). It carries out the reaction L-threonyl-[protein] + ATP = O-phospho-L-threonyl-[protein] + ADP + H(+). Functionally, catalytic subunit of a constitutively active serine/threonine-protein kinase complex that phosphorylates a large number of substrates containing acidic residues C-terminal to the phosphorylated serine or threonine. Phosphorylates YTA7 during S-phase to promote transcription of histones. The sequence is that of Casein kinase II subunit alpha' from Saccharomyces cerevisiae (strain ATCC 204508 / S288c) (Baker's yeast).